A 698-amino-acid polypeptide reads, in one-letter code: Dolichyl-diphosphooligosaccharide--protein glycosyltransferase subunit 2 (698 aa).

Positions 1–29 are cleaved as a signal peptide; sequence MAAAGGLPASATLLLLVIAAVAVAPLASA. Topologically, residues 30 to 600 are lumenal; the sequence is VRPVSDAHRS…RSPEKRPPKE (571 aa). Residues 601-621 form a helical membrane-spanning segment; sequence LSFAFTGLTLLPIVGFLIGLM. The Cytoplasmic portion of the chain corresponds to 622 to 638; that stretch reads RLGVNLKNFPSLPAPAA. Residues 639 to 659 form a helical membrane-spanning segment; the sequence is FASLFHAGIGAVLLLYVLFWI. A topological domain (lumenal) is located at residue lysine 660. A helical transmembrane segment spans residues 661–681; that stretch reads LDLFTTLKYLSFLGVFLVFVG. Over 682 to 698 the chain is Cytoplasmic; that stretch reads HRALSYLSSTSAKQKTA.

The protein belongs to the SWP1 family. In terms of assembly, component of the oligosaccharyltransferase (OST) complex.

It is found in the endoplasmic reticulum membrane. It participates in protein modification; protein glycosylation. Its function is as follows. Subunit of the oligosaccharyl transferase (OST) complex that catalyzes the initial transfer of a defined glycan (Glc(3)Man(9)GlcNAc(2) in eukaryotes) from the lipid carrier dolichol-pyrophosphate to an asparagine residue within an Asn-X-Ser/Thr consensus motif in nascent polypeptide chains, the first step in protein N-glycosylation. N-glycosylation occurs cotranslationally and the complex associates with the Sec61 complex at the channel-forming translocon complex that mediates protein translocation across the endoplasmic reticulum (ER). All subunits are required for a maximal enzyme activity. In Oryza sativa subsp. japonica (Rice), this protein is Dolichyl-diphosphooligosaccharide--protein glycosyltransferase subunit 2 (RPN2).